Consider the following 370-residue polypeptide: CCA-adding enzyme (370 aa).

ATP contacts are provided by Gly-8 and Arg-11. CTP is bound by residues Gly-8 and Arg-11. 2 residues coordinate Mg(2+): Asp-21 and Asp-23. Arg-91, Arg-137, and Arg-140 together coordinate ATP. Residues Arg-91, Arg-137, and Arg-140 each contribute to the CTP site.

It belongs to the tRNA nucleotidyltransferase/poly(A) polymerase family. Bacterial CCA-adding enzyme type 2 subfamily. Mg(2+) serves as cofactor.

The enzyme catalyses a tRNA precursor + 2 CTP + ATP = a tRNA with a 3' CCA end + 3 diphosphate. It carries out the reaction a tRNA with a 3' CCA end + 2 CTP + ATP = a tRNA with a 3' CCACCA end + 3 diphosphate. In terms of biological role, catalyzes the addition and repair of the essential 3'-terminal CCA sequence in tRNAs without using a nucleic acid template. Adds these three nucleotides in the order of C, C, and A to the tRNA nucleotide-73, using CTP and ATP as substrates and producing inorganic pyrophosphate. tRNA 3'-terminal CCA addition is required both for tRNA processing and repair. Also involved in tRNA surveillance by mediating tandem CCA addition to generate a CCACCA at the 3' terminus of unstable tRNAs. While stable tRNAs receive only 3'-terminal CCA, unstable tRNAs are marked with CCACCA and rapidly degraded. This is CCA-adding enzyme from Pseudomonas putida (strain W619).